A 576-amino-acid polypeptide reads, in one-letter code: Aspartate--tRNA ligase (576 aa).

Residue Glu170 coordinates L-aspartate. Residues 194–197 (QLFK) are aspartate. Residue Arg216 coordinates L-aspartate. ATP is bound by residues 216 to 218 (RDE) and Gln225. His438 contributes to the L-aspartate binding site. Residue Glu471 participates in ATP binding. Arg478 is a binding site for L-aspartate. 523-526 (GLDR) serves as a coordination point for ATP.

The protein belongs to the class-II aminoacyl-tRNA synthetase family. Type 1 subfamily. As to quaternary structure, homodimer.

The protein localises to the cytoplasm. It carries out the reaction tRNA(Asp) + L-aspartate + ATP = L-aspartyl-tRNA(Asp) + AMP + diphosphate. Its function is as follows. Catalyzes the attachment of L-aspartate to tRNA(Asp) in a two-step reaction: L-aspartate is first activated by ATP to form Asp-AMP and then transferred to the acceptor end of tRNA(Asp). The protein is Aspartate--tRNA ligase of Fervidobacterium nodosum (strain ATCC 35602 / DSM 5306 / Rt17-B1).